Consider the following 330-residue polypeptide: uncharacterized protein (330 aa).

An ABC transporter domain is found at 4 to 242 (LTISDLVVEY…AGEVLFEQST (239 aa)). 40-47 (GPSGCGKT) serves as a coordination point for ATP. 210–330 (DRVLELMPAQ…LIEHRELASE (121 aa)) is an a nucleoside 3',5'-cyclic phosphate binding site.

The protein belongs to the ABC transporter superfamily.

This is an uncharacterized protein from Mycobacterium bovis (strain ATCC BAA-935 / AF2122/97).